The primary structure comprises 293 residues: 4-hydroxy-tetrahydrodipicolinate synthase (293 aa).

Threonine 45 contributes to the pyruvate binding site. The active-site Proton donor/acceptor is tyrosine 133. Lysine 161 (schiff-base intermediate with substrate) is an active-site residue. Isoleucine 204 is a binding site for pyruvate.

This sequence belongs to the DapA family. As to quaternary structure, homotetramer; dimer of dimers.

Its subcellular location is the cytoplasm. It carries out the reaction L-aspartate 4-semialdehyde + pyruvate = (2S,4S)-4-hydroxy-2,3,4,5-tetrahydrodipicolinate + H2O + H(+). The protein operates within amino-acid biosynthesis; L-lysine biosynthesis via DAP pathway; (S)-tetrahydrodipicolinate from L-aspartate: step 3/4. Functionally, catalyzes the condensation of (S)-aspartate-beta-semialdehyde [(S)-ASA] and pyruvate to 4-hydroxy-tetrahydrodipicolinate (HTPA). The sequence is that of 4-hydroxy-tetrahydrodipicolinate synthase from Edwardsiella ictaluri (strain 93-146).